The following is a 618-amino-acid chain: ELMO domain-containing protein C (618 aa).

A coiled-coil region spans residues 1–72 (MERYRIRRER…EELRLQGDRF (72 aa)). Disordered regions lie at residues 153–175 (NFDNNNNNNNNSNNNNNGNKPSL) and 245–276 (TTTTTTTTTTTTTTTTTTTTTTTTTPTSSTTV). Composition is skewed to low complexity over residues 156–171 (NNNNNNNNSNNNNNGN) and 245–275 (TTTTTTTTTTTTTTTTTTTTTTTTTPTSSTT). One can recognise an ELMO domain in the interval 382–545 (DHEEYLKHLW…KLKSQLNEIS (164 aa)). Composition is skewed to low complexity over residues 574–592 (QQQQQLQQQQQSLPLPSSP) and 602–618 (TTTSSTSISPSKNTQNN). The tract at residues 574-618 (QQQQQLQQQQQSLPLPSSPRSFLNNYQQTTTSSTSISPSKNTQNN) is disordered.

This chain is ELMO domain-containing protein C (elmoC), found in Dictyostelium discoideum (Social amoeba).